Here is a 591-residue protein sequence, read N- to C-terminus: Probable acetolactate synthase large subunit (591 aa).

Glu47 contacts thiamine diphosphate. FAD-binding positions include Arg149, 258–279, and 301–320; these read HGTK…IGCR and DIDP…IVGD. Residues 396–476 are thiamine pyrophosphate binding; it reads QNQMWMAHFF…VVICIFDNRT (81 aa). Mg(2+)-binding residues include Asp447 and Asn474.

Belongs to the TPP enzyme family. Dimer of large and small chains. Mg(2+) serves as cofactor. The cofactor is thiamine diphosphate.

The catalysed reaction is 2 pyruvate + H(+) = (2S)-2-acetolactate + CO2. Its pathway is amino-acid biosynthesis; L-isoleucine biosynthesis; L-isoleucine from 2-oxobutanoate: step 1/4. It participates in amino-acid biosynthesis; L-valine biosynthesis; L-valine from pyruvate: step 1/4. The polypeptide is Probable acetolactate synthase large subunit (ilvB) (Methanocaldococcus jannaschii (strain ATCC 43067 / DSM 2661 / JAL-1 / JCM 10045 / NBRC 100440) (Methanococcus jannaschii)).